Here is a 1787-residue protein sequence, read N- to C-terminus: Chromodomain-helicase-DNA-binding protein 3 homolog (1787 aa).

Disordered regions lie at residues 1–80 (MSDD…PDPY) and 170–258 (PVTP…KEQG). The segment covering 10–43 (DGDETMEEDSMLAEGHEDGEEDVGEDEEEVETEE) has biased composition (acidic residues). A compositionally biased stretch (basic residues) spans 56–71 (PPPKKKKGGKKSSKKK). A compositionally biased stretch (basic and acidic residues) spans 192 to 243 (DGSDGEGGGHDSDQEFEALIKQHEKQQDEAEKGKEEARINRAAAKVDKRKAA). PHD-type zinc fingers lie at residues 265-312 (QENC…CEEH) and 328-375 (MDYC…CIIP). Chromo domains follow at residues 373–476 (IIPE…STLS) and 501–583 (MQIH…GPKE). Residues 628–812 (RHCWSNGTDA…FHLLNFLAPD (185 aa)) form the Helicase ATP-binding domain. 641-648 (DEMGLGKT) is an ATP binding site. The short motif at 763–766 (DEAH) is the DEAH box element. A Helicase C-terminal domain is found at 944–1107 (LLQKMLRKLK…GKSMSKTELD (164 aa)). 4 disordered regions span residues 1120–1141 (EEEA…PNEQ), 1186–1212 (TKEA…QDPN), 1248–1295 (ENMG…EERS), and 1754–1787 (RASS…YPRY). Residues 1190 to 1199 (DDADDDEDET) are compositionally biased toward acidic residues. A compositionally biased stretch (polar residues) spans 1248–1261 (ENMGQDWSAQNNQQ). Positions 1761 to 1773 (TKDEPMDTSDKDI) are enriched in basic and acidic residues.

Belongs to the SNF2/RAD54 helicase family. As to expression, expressed in the head and vulva.

The protein resides in the nucleus. It carries out the reaction ATP + H2O = ADP + phosphate + H(+). In terms of biological role, ATP-dependent chromatin-remodeling factor that has a role in notch signaling-dependent vulval cell fate determination. May also have a role in pharyngeal precursor cell specification. The sequence is that of Chromodomain-helicase-DNA-binding protein 3 homolog (chd-3) from Caenorhabditis elegans.